Here is a 433-residue protein sequence, read N- to C-terminus: Amino-acid acetyltransferase (433 aa).

In terms of domain architecture, N-acetyltransferase spans 287–426 (ELVREAAIED…ASLYNYQRNS (140 aa)).

The protein belongs to the acetyltransferase family. ArgA subfamily.

The protein resides in the cytoplasm. It catalyses the reaction L-glutamate + acetyl-CoA = N-acetyl-L-glutamate + CoA + H(+). The protein operates within amino-acid biosynthesis; L-arginine biosynthesis; N(2)-acetyl-L-ornithine from L-glutamate: step 1/4. The protein is Amino-acid acetyltransferase of Pseudomonas fluorescens (strain SBW25).